The following is a 54-amino-acid chain: UPF0057 membrane protein ssr1169 (54 aa).

2 helical membrane-spanning segments follow: residues 3 to 23 (IVKI…QVGI) and 31 to 51 (LLLT…WVIA).

The protein belongs to the UPF0057 (PMP3) family.

Its subcellular location is the cell membrane. This chain is UPF0057 membrane protein ssr1169, found in Synechocystis sp. (strain ATCC 27184 / PCC 6803 / Kazusa).